Reading from the N-terminus, the 378-residue chain is Vacuolar membrane protein CAGL0J10076g (378 aa).

A disordered region spans residues 18 to 70; it reads RGLPRLVTTSTTPTPTTEPTTEPTTTKDETSQTSATDASTATTSTAATSTAAT. Composition is skewed to low complexity over residues 25 to 41 and 48 to 70; these read TTSTTPTPTTEPTTEPT and SQTSATDASTATTSTAATSTAAT. Residues 118–138 form a helical membrane-spanning segment; it reads FIAVGSIAGAILMLIFLWWSI. The segment at 299–368 is disordered; the sequence is NDYDTPLIPD…ARDHRKTPSM (70 aa). Positions 321–337 are enriched in basic residues; the sequence is RSHRKTPSNDKYHRRNR. Residues 343–356 show a composition bias toward low complexity; it reads SPSRSPTRTPIRTR.

It belongs to the PRM5 family.

Its subcellular location is the vacuole membrane. The sequence is that of Vacuolar membrane protein CAGL0J10076g from Candida glabrata (strain ATCC 2001 / BCRC 20586 / JCM 3761 / NBRC 0622 / NRRL Y-65 / CBS 138) (Yeast).